The primary structure comprises 567 residues: Septation ring formation regulator EzrA (567 aa).

Residues 1-2 (ME) are Extracellular-facing. A helical membrane pass occupies residues 3-21 (IAVIVLLLLGGVMIYNHVY). The Cytoplasmic segment spans residues 22 to 567 (RKKMYSEIDR…IFRDERSKEE (546 aa)). 2 coiled-coil regions span residues 97 to 188 (RYAK…LTAS) and 254 to 465 (REIV…LEEK).

This sequence belongs to the EzrA family.

The protein localises to the cell membrane. Its function is as follows. Negative regulator of FtsZ ring formation; modulates the frequency and position of FtsZ ring formation. Inhibits FtsZ ring formation at polar sites. Interacts either with FtsZ or with one of its binding partners to promote depolymerization. This Geobacillus sp. (strain WCH70) protein is Septation ring formation regulator EzrA.